The chain runs to 1031 residues: Error-prone DNA polymerase (1031 aa).

The protein belongs to the DNA polymerase type-C family. DnaE2 subfamily.

The protein localises to the cytoplasm. The enzyme catalyses DNA(n) + a 2'-deoxyribonucleoside 5'-triphosphate = DNA(n+1) + diphosphate. In terms of biological role, DNA polymerase involved in damage-induced mutagenesis and translesion synthesis (TLS). It is not the major replicative DNA polymerase. In Pseudomonas aeruginosa (strain ATCC 15692 / DSM 22644 / CIP 104116 / JCM 14847 / LMG 12228 / 1C / PRS 101 / PAO1), this protein is Error-prone DNA polymerase.